The chain runs to 433 residues: MTDFSPREIVSELDRFIVGQADAKRAVAIALRNRWRRLQLEGILREEVLPKNILMIGPTGVGKTEIARRLAKLAGAPFLKVEATKFTEVGYVGRDVEQIIRDLVEVAIAQVRERKRKDVQARAQIAAEERVLDALVGPGSSPATRDSFRRKLRAGDLNDKEIEVETQASSGSPMFEIPGMPGGQIGAISIGDIFGKMGGRTKTRRLTVADSHDILINEEADKLLDNDQLVQEAINVVENNGIVFLDEIDKICVRDGRSGGEVSREGVQRDLLPLIEGTTVATKHGAVKTEHILFIASGAFHIAKPSDLLPELQGRLPIRVELNALTRDDMRRILTEPEASLIKQYIALLQTEGVTLEFSDDAIDALADVAVGVNSTVENIGARRLQTVMERVLDEISFVAPDRGGETIRIDADYVQKNVGDLAKNTDLSRFIL.

ATP is bound by residues Val18, Gly60–Glu65, Asp246, Glu311, and Arg383.

It belongs to the ClpX chaperone family. HslU subfamily. In terms of assembly, a double ring-shaped homohexamer of HslV is capped on each side by a ring-shaped HslU homohexamer. The assembly of the HslU/HslV complex is dependent on binding of ATP.

The protein localises to the cytoplasm. Functionally, ATPase subunit of a proteasome-like degradation complex; this subunit has chaperone activity. The binding of ATP and its subsequent hydrolysis by HslU are essential for unfolding of protein substrates subsequently hydrolyzed by HslV. HslU recognizes the N-terminal part of its protein substrates and unfolds these before they are guided to HslV for hydrolysis. The chain is ATP-dependent protease ATPase subunit HslU from Rhodopseudomonas palustris (strain BisB5).